The chain runs to 114 residues: MSQAEMSTCSMPHTQRVFQEAVRNGNTKELHSLLQNMTNCEFNVNSFGPEGQTALHQSVIDGNLELVKLLVKFGADIRLANRDGWSALHIAAYGGHQDIVLYLITKAKYSSSSR.

2 ANK repeats span residues 50 to 79 and 83 to 112; these read EGQT…DIRL and DGWS…YSSS.

The protein belongs to the NRARP family. Forms a ternary complex with the intracellular domain (ICD) of notch1 and rbpj/suh.

In terms of biological role, promotes loss of intracellular domain (ICD) of Notch1 in embryos. By down-regulating ICD levels, could function as a negative feedback regulator of Notch signaling that attenuates ICD-mediated transcription. Involved in angiogenesis. May be involved in somitogenesis. The sequence is that of Notch-regulated ankyrin repeat-containing protein (nrarp) from Xenopus laevis (African clawed frog).